A 125-amino-acid chain; its full sequence is Small ribosomal subunit protein uS13 (125 aa).

Belongs to the universal ribosomal protein uS13 family. As to quaternary structure, part of the 30S ribosomal subunit. Forms a loose heterodimer with protein S19. Forms two bridges to the 50S subunit in the 70S ribosome.

In terms of biological role, located at the top of the head of the 30S subunit, it contacts several helices of the 16S rRNA. In the 70S ribosome it contacts the 23S rRNA (bridge B1a) and protein L5 of the 50S subunit (bridge B1b), connecting the 2 subunits; these bridges are implicated in subunit movement. Contacts the tRNAs in the A and P-sites. The polypeptide is Small ribosomal subunit protein uS13 (Rickettsia africae (strain ESF-5)).